The following is a 277-amino-acid chain: Protein OPG166 (277 aa).

N-linked (GlcNAc...) asparagine; by host glycosylation is found at asparagine 29 and asparagine 58. A run of 5 helical transmembrane segments spans residues 124-144, 156-176, 186-206, 219-239, and 247-267; these read TMLMFIFTGITLFLLFLEITY, GILQVFGCVIAMIELCGAFLF, IIGLLMMTLPSIFLIITKVFS, LIIYYQLAGYILTVLGLGLSL, and LLLSGLGTIMVSEHFSLLFLV.

It belongs to the orthopoxvirus OPG166 protein family.

The protein localises to the host membrane. Its function is as follows. Promotes, when overexpressed, the influx of extracellular Ca(2+), leading to membrane permeability and host cell necrosis. The polypeptide is Protein OPG166 (OPG166) (Bos taurus (Bovine)).